A 193-amino-acid chain; its full sequence is 3-isopropylmalate dehydratase small subunit (193 aa).

The protein belongs to the LeuD family. LeuD type 1 subfamily. As to quaternary structure, heterodimer of LeuC and LeuD.

The enzyme catalyses (2R,3S)-3-isopropylmalate = (2S)-2-isopropylmalate. It participates in amino-acid biosynthesis; L-leucine biosynthesis; L-leucine from 3-methyl-2-oxobutanoate: step 2/4. Functionally, catalyzes the isomerization between 2-isopropylmalate and 3-isopropylmalate, via the formation of 2-isopropylmaleate. This Bacillus cereus (strain B4264) protein is 3-isopropylmalate dehydratase small subunit.